The following is a 411-amino-acid chain: 2-oxoglutarate-dependent dioxygenase AOP3 (411 aa).

One can recognise a Fe2OG dioxygenase domain in the interval 259–356 (GNASVGAKEA…RYAAALFSNP (98 aa)). Fe cation contacts are provided by His-279, Asp-281, and His-336. Residue Arg-347 coordinates 2-oxoglutarate.

It belongs to the iron/ascorbate-dependent oxidoreductase family. Fe(2+) serves as cofactor. Not expressed.

Functionally, 2-oxoglutarate-dependent dioxygenase involved in glucosinolates biosynthesis. Catalyzes the conversion of methylsulfinylalkyl glucosinolates to hydroxyalkyl glucosinolates. This Arabidopsis thaliana (Mouse-ear cress) protein is 2-oxoglutarate-dependent dioxygenase AOP3 (AOP3).